We begin with the raw amino-acid sequence, 91 residues long: Beta-microseminoprotein (91 aa).

5 disulfides stabilise this stretch: C2-C54, C22-C46, C41-C75, C44-C53, and C68-C88.

In terms of tissue distribution, expressed in ciliated epithelium of nidamental gland and in secretory-like cells in accessory nidamental gland (at protein level). Expressed in ovary, nidamental gland and accessory nidamental gland.

It is found in the secreted. Functionally, acts as a pheromone. Triggers aggressive behaviors in males such as fin beating, lunging and grabbing. These behaviors form part of the competition for fertile females. The protein is Beta-microseminoprotein of Doryteuthis pealeii (Longfin inshore squid).